The chain runs to 258 residues: Mediator of RNA polymerase II transcription subunit 18 (258 aa).

It belongs to the Mediator complex subunit 18 family. As to quaternary structure, component of the Mediator complex.

It is found in the nucleus. In terms of biological role, component of the Mediator complex, a coactivator involved in the regulated transcription of nearly all RNA polymerase II-dependent genes. Mediator functions as a bridge to convey information from gene-specific regulatory proteins to the basal RNA polymerase II transcription machinery. Mediator is recruited to promoters by direct interactions with regulatory proteins and serves as a scaffold for the assembly of a functional preinitiation complex with RNA polymerase II and the general transcription factors. The polypeptide is Mediator of RNA polymerase II transcription subunit 18 (SRB5) (Eremothecium gossypii (strain ATCC 10895 / CBS 109.51 / FGSC 9923 / NRRL Y-1056) (Yeast)).